The chain runs to 162 residues: Catabolic 3-dehydroquinase (162 aa).

Catalysis depends on tyrosine 24, which acts as the Proton acceptor. 3 residues coordinate substrate: asparagine 88, histidine 94, and aspartate 101. Catalysis depends on histidine 114, which acts as the Proton donor. Substrate is bound by residues 115–116 (VS) and arginine 125.

Belongs to the type-II 3-dehydroquinase family. In terms of assembly, homododecamer. Adopts a ring-like structure, composed of an arrangement of two hexameric rings stacked on top of one another.

It carries out the reaction 3-dehydroquinate = 3-dehydroshikimate + H2O. It participates in aromatic compound metabolism; 3,4-dihydroxybenzoate biosynthesis; 3,4-dihydroxybenzoate from 3-dehydroquinate: step 1/2. Functionally, is involved in the catabolism of quinate. Allows the utilization of quinate as carbon source via the beta-ketoadipate pathway. In Podospora anserina (strain S / ATCC MYA-4624 / DSM 980 / FGSC 10383) (Pleurage anserina), this protein is Catabolic 3-dehydroquinase.